The following is a 342-amino-acid chain: Methionine import ATP-binding protein MetN (342 aa).

Positions 2–241 constitute an ABC transporter domain; it reads ITLEQVTKIY…PQQPITKRFV (240 aa). 38 to 45 is an ATP binding site; the sequence is GYSGAGKS.

This sequence belongs to the ABC transporter superfamily. Methionine importer (TC 3.A.1.24) family. The complex is composed of two ATP-binding proteins (MetN), two transmembrane proteins (MetI) and a solute-binding protein (MetQ).

It is found in the cell membrane. The enzyme catalyses L-methionine(out) + ATP + H2O = L-methionine(in) + ADP + phosphate + H(+). It catalyses the reaction D-methionine(out) + ATP + H2O = D-methionine(in) + ADP + phosphate + H(+). Part of the ABC transporter complex MetNIQ involved in methionine import. Responsible for energy coupling to the transport system. This is Methionine import ATP-binding protein MetN from Geobacillus kaustophilus (strain HTA426).